Consider the following 488-residue polypeptide: MNLEETMPLVFERSIPGRIGFSLPESDVPETNAGDYFDQAYIRSIPADLPELSELEIMRHYTNLSNHNFGVDSGFYPLGSCTMKYNPKINEKVARFPGFANIHPNQPESSVQGALELLYDLQTSLVEITGMDEVTLQPAAGAHGEWTGLMLIRAFHEKNGDTKRTKVIIPDSAHGTNPASAAVAGFDVVTVKSNEKGLVDVADLKKVVGEDTAALMLTNPNTLGLFEKDIVEMAEIVHEAGGKLYYDGANLNAIMAKVRPGDMGFDVVHLNLHKTFTGPHGGGGPGSGPIGVKKELIPFLPTPVLTKKEDIYTFDYNYPDSIGRVKPYYGNFGINVRAYTYIRTMGPDGLKLVTEYAVLNANYMMRKLQEAYDLPFDQVCKHEFVLSGNRQKKLGVRTVDIAKRLLDHNFHPPTVYFPLIVGEAIMIEPTETESKETLDSFIDTMLKIAKEAEENPEIVQEAPHSTYVKRLDETRAARKPILRYQKEV.

Lys274 bears the N6-(pyridoxal phosphate)lysine mark.

The protein belongs to the GcvP family. C-terminal subunit subfamily. In terms of assembly, the glycine cleavage system is composed of four proteins: P, T, L and H. In this organism, the P 'protein' is a heterodimer of two subunits. Pyridoxal 5'-phosphate serves as cofactor.

It catalyses the reaction N(6)-[(R)-lipoyl]-L-lysyl-[glycine-cleavage complex H protein] + glycine + H(+) = N(6)-[(R)-S(8)-aminomethyldihydrolipoyl]-L-lysyl-[glycine-cleavage complex H protein] + CO2. In terms of biological role, the glycine cleavage system catalyzes the degradation of glycine. The P protein binds the alpha-amino group of glycine through its pyridoxal phosphate cofactor; CO(2) is released and the remaining methylamine moiety is then transferred to the lipoamide cofactor of the H protein. This chain is Probable glycine dehydrogenase (decarboxylating) subunit 2, found in Listeria monocytogenes serovar 1/2a (strain ATCC BAA-679 / EGD-e).